The primary structure comprises 668 residues: Pentatricopeptide repeat-containing protein CRP1, chloroplastic (668 aa).

Residues 1 to 64 (MPASLLPPTF…SASLTSPSPP (64 aa)) constitute a chloroplast transit peptide. PPR repeat units follow at residues 154–188 (SPLL…DFLP), 189–226 (DLAS…RLEP), 227–261 (DAPL…GLTP), 262–297 (RSNA…EIKP), 298–332 (RTRA…GVAP), 333–367 (DEAT…GVKP), 368–402 (SSYV…GVRP), 403–437 (DRHF…GIEP), 438–472 (DVVT…NCPP), 473–507 (GTTT…GLVP), 508–542 (NIIT…GLKP), 543–577 (SPTM…GLEV), 578–612 (SILV…GLRP), and 613–647 (DVIT…GCAP).

Belongs to the PPR family. P subfamily. Component of a multisubunit complex.

It is found in the plastid. It localises to the chloroplast stroma. Its function is as follows. Required for the translation of the chloroplast petA and petD mRNAs. Required for the processing of the petD mRNA from a polycistronic precursor. Binds with high affinity to the 5'-UTR of the chloroplastic petA transcript. Activates psaC and petA translation by binding their 5'-UTRs. The sequence is that of Pentatricopeptide repeat-containing protein CRP1, chloroplastic from Zea mays (Maize).